Here is a 139-residue protein sequence, read N- to C-terminus: Ribonuclease homolog (139 aa).

A signal peptide spans 1–23; it reads MAMSSLWWTAILLLALTVSMCYG. His34 serves as the catalytic Proton acceptor. 3 disulfide bridges follow: Cys49–Cys102, Cys64–Cys111, and Cys82–Cys126. 65 to 69 is a binding site for substrate; it reads KSFNT. His133 serves as the catalytic Proton donor.

Belongs to the pancreatic ribonuclease family.

It localises to the secreted. The protein is Ribonuclease homolog of Gallus gallus (Chicken).